The sequence spans 833 residues: Transcription factor MBP1 (833 aa).

The HTH APSES-type domain occupies 5 to 111 (IYSARYSGVD…FTQTDGSASP (107 aa)). The H-T-H motif DNA-binding region spans 36-57 (ATHILKAANFAKAKRTRILEKE). Disordered regions lie at residues 104–223 (QTDG…QSPT) and 280–329 (QQSS…SPII). S110 carries the phosphoserine modification. Residues 115–129 (PKHHHASKVDRKKAI) are compositionally biased toward basic residues. Residues 139–149 (ETKRNNKKAEE) are compositionally biased toward basic and acidic residues. Polar residues predominate over residues 201–223 (PNSSISTTQLPSIRSTMGPQSPT). Positions 280–307 (QQSSLIQTQQTESMATSVSSSPSLPTSP) are enriched in low complexity. A Phosphothreonine modification is found at T325. 2 positions are modified to phosphoserine: S326 and S330. ANK repeat units follow at residues 394 to 423 (ELHT…SIRS) and 512 to 541 (NGDT…LTTI). A Phosphoserine modification is found at S827.

Component of the transcription complex MCB-binding factor (MBF) composed of SWI6 and MBP1. Interacts with MSA1.

The protein resides in the nucleus. Binds to MCB elements (Mlu I cell cycle box) found in the promoter of most DNA synthesis genes. Transcriptional activation by MBF has an important role in the transition from G1 to S phase. It may have a dual role in that it behaves as an activator of transcription at the G1-S boundary and as a repressor during other stages of the cell cycle. This chain is Transcription factor MBP1 (MBP1), found in Saccharomyces cerevisiae (strain ATCC 204508 / S288c) (Baker's yeast).